The sequence spans 151 residues: Neuroglobin (151 aa).

Residues 1–149 (MERPEPELIR…VVQAMSRGWD (149 aa)) enclose the Globin domain. Residues H64 and H96 each coordinate heme b.

The protein belongs to the globin family. In terms of assembly, monomer. Homodimer and homotetramer; disulfide-linked. Mainly monomeric but also detected as part of homodimers and homotetramers. Interacts with 14-3-3 proteins; regulates the phosphorylation of NGB. Could interact (ferrous form) with G-alpha(i) proteins (GTP-bound form). Post-translationally, phosphorylated during hypoxia by ERK1/ERK2. Phosphorylation regulates the heme pocket hexacoordination preventing the association of His-64 with the heme metal center. Thereby, promotes the access of dioxygen and nitrite to the heme and stimulates the nitrite reductase activity. Phosphorylation during hypoxia is stabilized by 14-3-3 proteins.

It is found in the cytoplasm. The protein resides in the cytosol. The protein localises to the mitochondrion matrix. It catalyses the reaction Fe(III)-heme b-[protein] + nitric oxide + H2O = Fe(II)-heme b-[protein] + nitrite + 2 H(+). Its function is as follows. Monomeric globin with a bis-histidyl six-coordinate heme-iron atom through which it can bind dioxygen, carbon monoxide and nitric oxide. Could help transport oxygen and increase its availability to the metabolically active neuronal tissues, though its low quantity in tissues as well as its high affinity for dioxygen, which may limit its oxygen-releasing ability, argue against it. The ferrous/deoxygenated form exhibits a nitrite reductase activity and it could produce nitric oxide which in turn inhibits cellular respiration in response to hypoxia. In its ferrous/deoxygenated state, it may also exhibit GDI (Guanine nucleotide Dissociation Inhibitor) activity toward heterotrimeric G-alpha proteins, thereby regulating signal transduction to facilitate neuroprotective responses in the wake of hypoxia and associated oxidative stress. This Macaca mulatta (Rhesus macaque) protein is Neuroglobin.